Here is a 316-residue protein sequence, read N- to C-terminus: ATP synthase gamma chain (316 aa).

This sequence belongs to the ATPase gamma chain family. In terms of assembly, F-type ATPases have 2 components, CF(1) - the catalytic core - and CF(0) - the membrane proton channel. CF(1) has five subunits: alpha(3), beta(3), gamma(1), delta(1), epsilon(1). CF(0) has three main subunits: a, b and c.

The protein localises to the cellular thylakoid membrane. Its function is as follows. Produces ATP from ADP in the presence of a proton gradient across the membrane. The gamma chain is believed to be important in regulating ATPase activity and the flow of protons through the CF(0) complex. The protein is ATP synthase gamma chain of Parasynechococcus marenigrum (strain WH8102).